Reading from the N-terminus, the 63-residue chain is UPF0370 protein PC1_1167 (63 aa).

A helical membrane pass occupies residues 3-23; it reads WLADYWWIILIILIGMLINGI. A disordered region spans residues 37-63; it reads NKPKLPPHRDNNDKWDDEDDDWPKKKP.

The protein belongs to the UPF0370 family.

The protein localises to the cell membrane. The sequence is that of UPF0370 protein PC1_1167 from Pectobacterium carotovorum subsp. carotovorum (strain PC1).